Reading from the N-terminus, the 317-residue chain is Probable cell division protein WhiA (317 aa).

Positions 276–310 (TLKELGEMVSGGKISKSGINHRLRKIDDIAEKLRA) form a DNA-binding region, H-T-H motif.

This sequence belongs to the WhiA family.

Its function is as follows. Involved in cell division and chromosome segregation. This Bacillus thuringiensis (strain Al Hakam) protein is Probable cell division protein WhiA.